The primary structure comprises 234 residues: Sugar fermentation stimulation protein homolog (234 aa).

Belongs to the SfsA family.

This Shewanella pealeana (strain ATCC 700345 / ANG-SQ1) protein is Sugar fermentation stimulation protein homolog.